Reading from the N-terminus, the 113-residue chain is MTEKKNRREKKNPREAKVTFEGLVTEALPNGMFRVRLENDTIILGYISGKIRSSSIRILMGDRVKIEVSRYDSSKGRIIYRLPHKDSKRIEDSKDSEDLKDSEDLKDTKDSKD.

In terms of domain architecture, S1-like spans 8-83 (REKKNPREAK…SKGRIIYRLP (76 aa)). The tract at residues 86 to 113 (DSKRIEDSKDSEDLKDSEDLKDTKDSKD) is disordered.

Belongs to the IF-1 family. As to quaternary structure, component of the 30S ribosomal translation pre-initiation complex which assembles on the 30S ribosome in the order IF-2 and IF-3, IF-1 and N-formylmethionyl-tRNA(fMet); mRNA recruitment can occur at any time during PIC assembly.

The protein resides in the plastid. The protein localises to the chloroplast. Its function is as follows. One of the essential components for the initiation of protein synthesis. Stabilizes the binding of IF-2 and IF-3 on the 30S subunit to which N-formylmethionyl-tRNA(fMet) subsequently binds. Helps modulate mRNA selection, yielding the 30S pre-initiation complex (PIC). Upon addition of the 50S ribosomal subunit IF-1, IF-2 and IF-3 are released leaving the mature 70S translation initiation complex. This is Translation initiation factor IF-1, chloroplastic from Hordeum vulgare (Barley).